The primary structure comprises 152 residues: Regulatory protein RecX (152 aa).

This sequence belongs to the RecX family.

It is found in the cytoplasm. In terms of biological role, modulates RecA activity. This chain is Regulatory protein RecX, found in Haemophilus influenzae (strain 86-028NP).